The chain runs to 147 residues: Calcium-regulated heat stable protein 1 (147 aa).

The segment covering methionine 1 to proline 12 has biased composition (pro residues). The disordered stretch occupies residues methionine 1 to arginine 49. Serine 2 carries the N-acetylserine modification. 3 positions are modified to phosphoserine: serine 30, serine 32, and serine 41. Residue threonine 45 is modified to Phosphothreonine. Phosphoserine is present on residues serine 52 and serine 58. The CSD domain maps to valine 62–threonine 129. Residues serine 146 and serine 147 each carry the phosphoserine modification.

As to quaternary structure, homodimer. Interacts with STYX. Can be phosphorylated by DYRK2 (in vitro). Dephosphorylated by calcineurin in a Ca(2+) dependent manner, and probably by PP2A or PP4 serine phosphatases in cAMP- and PKC-mediated pathways. As to expression, widely expressed.

Its subcellular location is the cytoplasm. It localises to the P-body. The protein localises to the cytoplasmic granule. Functionally, binds mRNA and regulates the stability of target mRNA. In Rattus norvegicus (Rat), this protein is Calcium-regulated heat stable protein 1 (Carhsp1).